The chain runs to 411 residues: Pre-mRNA-splicing factor dre4 (411 aa).

The region spanning 3–36 (QPLPPGWTEHKAPSGIPYYWNAELKKSTYQRPSF) is the WW 1 domain. Residues 65 to 84 (NAEERKNSRDLRKQLPDRPK) are disordered. Over residues 66–83 (AEERKNSRDLRKQLPDRP) the composition is skewed to basic and acidic residues. The WW 2 domain occupies 89-122 (IPNNDSWVVVFTKKNRYFFHNLKSHESYWEPPLE). Residues 138–209 (ISKDSSQSQN…KSHSAEELEF (72 aa)) are disordered. The segment covering 140–151 (KDSSQSQNVDSG) has biased composition (polar residues). Basic and acidic residues predominate over residues 152-166 (KTNHEEIHESRHLQT). The segment covering 167-179 (EIEEPSGLEESSE) has biased composition (acidic residues). One can recognise an FF domain in the interval 239 to 293 (TDDARRVFTELLKDKNIGAYQPWELVYPKLLDDDRFYVLDSGERRKEVFEEYCKS).

In terms of assembly, component of the spliceosomal complex. Interacts with prp19.

The protein resides in the nucleus. Component of the spliceosome involved in mRNA processing. This chain is Pre-mRNA-splicing factor dre4 (dre4), found in Schizosaccharomyces pombe (strain 972 / ATCC 24843) (Fission yeast).